The following is a 539-amino-acid chain: Chaperonin GroEL (539 aa).

ATP contacts are provided by residues T29 to P32, D86 to T90, G413, N477 to A479, and D493.

Belongs to the chaperonin (HSP60) family. As to quaternary structure, forms a cylinder of 14 subunits composed of two heptameric rings stacked back-to-back. Interacts with the co-chaperonin GroES.

Its subcellular location is the cytoplasm. It carries out the reaction ATP + H2O + a folded polypeptide = ADP + phosphate + an unfolded polypeptide.. Its function is as follows. Together with its co-chaperonin GroES, plays an essential role in assisting protein folding. The GroEL-GroES system forms a nano-cage that allows encapsulation of the non-native substrate proteins and provides a physical environment optimized to promote and accelerate protein folding. This chain is Chaperonin GroEL, found in Clavibacter michiganensis subsp. michiganensis (strain NCPPB 382).